A 635-amino-acid polypeptide reads, in one-letter code: Signal recognition particle subunit SRP72 (635 aa).

TPR repeat units lie at residues 7 to 42 (GGLY…YPKE), 75 to 105 (GHVG…DKDD), 106 to 139 (VKAL…HSDD), 171 to 204 (YSQL…CRKS), 220 to 253 (DSIR…NHPD), 255 to 290 (SVKA…DQTK), and 436 to 469 (VEVE…QCRL). The interval 539-635 (KRKRKIRLPK…QKKKKNASKF (97 aa)) is disordered. Positions 557-569 (DPERWLPRQERST) are enriched in basic and acidic residues. Residues 625–635 (KQKKKKNASKF) are compositionally biased toward basic residues.

The protein belongs to the SRP72 family. In terms of assembly, heterodimer with srpa-68. Srpa-68-srpa-72 heterodimer formation is stabilized by the presence of 7SL RNA. Component of a signal recognition particle (SRP) complex that consists of a 7SL RNA molecule of 300 nucleotides and six protein subunits: srpa-72, srpa-68, SRP54, F37F2.2/SRP19, F25G6.8/SRP14 and ZK512.4/SRP9. Within the SRP complex, interacts (via N-terminus) with srpa-68 (via C-terminus).

The protein localises to the cytoplasm. It is found in the endoplasmic reticulum. Component of the signal recognition particle (SRP) complex, a ribonucleoprotein complex that mediates the cotranslational targeting of secretory and membrane proteins to the endoplasmic reticulum (ER). The SRP complex interacts with the signal sequence in nascent secretory and membrane proteins and directs them to the membrane of the ER. The SRP complex targets the ribosome-nascent chain complex to the SRP receptor (SR), which is anchored in the ER, where SR compaction and GTPase rearrangement drive cotranslational protein translocation into the ER. Binds the signal recognition particle RNA (7SL RNA) in presence of srpa-68. Can bind 7SL RNA with low affinity. The SRP complex possibly participates in the elongation arrest function. This is Signal recognition particle subunit SRP72 from Caenorhabditis elegans.